Here is a 154-residue protein sequence, read N- to C-terminus: Phospholipase A2 OS1 (154 aa).

Residues M1–L27 form the signal peptide. Intrachain disulfides connect C38–C104, C54–C153, C56–C72, C71–C132, C78–C125, C88–C118, and C111–C123. Ca(2+) contacts are provided by G57 and G59. The active site involves H75. Residue D76 participates in Ca(2+) binding. The active site involves D126.

This sequence belongs to the phospholipase A2 family. Group I subfamily. D49 sub-subfamily. In terms of assembly, monomer. Requires Ca(2+) as cofactor. In terms of tissue distribution, expressed by the venom gland.

It localises to the secreted. It catalyses the reaction a 1,2-diacyl-sn-glycero-3-phosphocholine + H2O = a 1-acyl-sn-glycero-3-phosphocholine + a fatty acid + H(+). In terms of biological role, snake venom phospholipase A2 (PLA2) that has a low specific activity on phospholipid substrates, and is neither neurotoxic, nor myotoxic. Induces endothelial cell migration which is mediated, at least in part, by its hydrolytic products. Shows antimalarial activity, but is not able to potently inhibit HIV-1 replication. Binds in a calcium-independent fashion with very high affinity to a muscle-type (M-type) PLA2 receptor, but is a very poor ligand for neuronal-type (N-type) receptors. PLA2 catalyzes the calcium-dependent hydrolysis of the 2-acyl groups in 3-sn-phosphoglycerides. In Oxyuranus scutellatus scutellatus (Australian taipan), this protein is Phospholipase A2 OS1.